The chain runs to 443 residues: MSLAGLKSAPGGALRGIVRAPGDKSISHRSMILGALATGTTTVEGLLEGDDVLATARAMQAFGARIEREGVGRWRIEGKGGFEEPVDVIDCGNAGTGVRLIMGAAAGFAMCATFTGDQSLRGRPMGRVLDPLARMGATWLGRDKGRLPLTLKGGNLRGLNYTLPMASAQVKSAVLLAGLHAEGGVEVIEPEATRDHTERMLRAFGAEVIVEDRKAGDKTFRHVRLPEGQKLTGTHVAVPGDPSSAAFPLVAALIVPGSEVTVEGVMLNELRTGLFTTLQEMGADLVISNVRVASGEEVGDITARYSQLKGVVVPPERAPSMIDEYPILAVAAAFASGETVMRGVGEMRVKESDRISLTANGLKACGVQVVEEPEGFIVTGTGQPPKGGATVVTHGDHRIAMSHLILGMAAQAEVAVDEPGMIATSFPGFADLMRGLGATLAEA.

K24, S25, and R29 together coordinate 3-phosphoshikimate. Residue K24 participates in phosphoenolpyruvate binding. Residues G95 and R123 each coordinate phosphoenolpyruvate. Residues S167, Q169, D323, and K350 each coordinate 3-phosphoshikimate. Residue Q169 participates in phosphoenolpyruvate binding. D323 (proton acceptor) is an active-site residue. R354 and R398 together coordinate phosphoenolpyruvate.

This sequence belongs to the EPSP synthase family. In terms of assembly, monomer.

Its subcellular location is the cytoplasm. The catalysed reaction is 3-phosphoshikimate + phosphoenolpyruvate = 5-O-(1-carboxyvinyl)-3-phosphoshikimate + phosphate. The protein operates within metabolic intermediate biosynthesis; chorismate biosynthesis; chorismate from D-erythrose 4-phosphate and phosphoenolpyruvate: step 6/7. Its function is as follows. Catalyzes the transfer of the enolpyruvyl moiety of phosphoenolpyruvate (PEP) to the 5-hydroxyl of shikimate-3-phosphate (S3P) to produce enolpyruvyl shikimate-3-phosphate and inorganic phosphate. The polypeptide is 3-phosphoshikimate 1-carboxyvinyltransferase (Caulobacter vibrioides (strain ATCC 19089 / CIP 103742 / CB 15) (Caulobacter crescentus)).